Reading from the N-terminus, the 197-residue chain is Large ribosomal subunit protein bL9c (197 aa).

Residues 1–42 (MASSTALSLSWSSSPCWSHSFNGGANETLKVSERRFNFEVVS) constitute a chloroplast transit peptide.

Belongs to the bacterial ribosomal protein bL9 family. In terms of assembly, part of the 50S ribosomal subunit.

Its subcellular location is the plastid. The protein resides in the chloroplast. Its function is as follows. Binds to the 23S rRNA. In Arabidopsis thaliana (Mouse-ear cress), this protein is Large ribosomal subunit protein bL9c (RPL9).